Consider the following 152-residue polypeptide: MQCPFCNHGELKVIDSRNAPEANAIKRRRECLKCSQRFTTFETVELTLQVLKRDGRYENFQESKLIHGLNAASSHTRIGQDQVHAIASNVKSELLGKQNREISTKEIGELVMKYLKKADMIAYIRFACVYRRFKDVGELMEVLLSATPDMEK.

The segment at 3–34 (CPFCNHGELKVIDSRNAPEANAIKRRRECLKC) is a zinc-finger region. Positions 48–138 (LQVLKRDGRY…VYRRFKDVGE (91 aa)) constitute an ATP-cone domain.

Belongs to the NrdR family. Requires Zn(2+) as cofactor.

In terms of biological role, negatively regulates transcription of bacterial ribonucleotide reductase nrd genes and operons by binding to NrdR-boxes. The chain is Transcriptional repressor NrdR from Chlamydia pneumoniae (Chlamydophila pneumoniae).